Consider the following 332-residue polypeptide: Putative integrase/recombinase y4rC (332 aa).

The 94-residue stretch at 5 to 98 folds into the Core-binding (CB) domain; sequence ASLAPLLESF…AIHSFFRYAA (94 aa). The 186-residue stretch at 122–307 folds into the Tyr recombinase domain; that stretch reads TLVNFLTRPE…TLAMKEAALA (186 aa). Active-site residues include arginine 162, lysine 187, histidine 259, arginine 262, and histidine 285. Tyrosine 294 functions as the O-(3'-phospho-DNA)-tyrosine intermediate in the catalytic mechanism.

Belongs to the 'phage' integrase family.

This is Putative integrase/recombinase y4rC from Sinorhizobium fredii (strain NBRC 101917 / NGR234).